The sequence spans 504 residues: UDP-N-acetylmuramoylalanine--D-glutamate ligase (504 aa).

132–138 (GTNGKTT) is an ATP binding site. A compositionally biased stretch (basic and acidic residues) spans 286 to 295 (DRDASDEPAP). Positions 286–305 (DRDASDEPAPKRRRKNEVAT) are disordered.

It belongs to the MurCDEF family.

The protein resides in the cytoplasm. It carries out the reaction UDP-N-acetyl-alpha-D-muramoyl-L-alanine + D-glutamate + ATP = UDP-N-acetyl-alpha-D-muramoyl-L-alanyl-D-glutamate + ADP + phosphate + H(+). It functions in the pathway cell wall biogenesis; peptidoglycan biosynthesis. Functionally, cell wall formation. Catalyzes the addition of glutamate to the nucleotide precursor UDP-N-acetylmuramoyl-L-alanine (UMA). The sequence is that of UDP-N-acetylmuramoylalanine--D-glutamate ligase from Paraburkholderia xenovorans (strain LB400).